A 144-amino-acid polypeptide reads, in one-letter code: Transcriptional regulator SlyA (144 aa).

One can recognise an HTH marR-type domain in the interval E2–K135. Residues Q49 to E72 constitute a DNA-binding region (H-T-H motif).

It belongs to the SlyA family. In terms of assembly, homodimer.

Functionally, transcription regulator that can specifically activate or repress expression of target genes. The protein is Transcriptional regulator SlyA of Sodalis glossinidius (strain morsitans).